A 463-amino-acid polypeptide reads, in one-letter code: MHLHFTPRQIVEKLDQYIIGQKDAKKAVAVALRNRYRRSKLPEDLRDEIAPKNILMIGPTGVGKTEVARRMAKLVGAPFIKVEATKFTEVGYVGRDVESMVRDLVETSVRIVKEEMMVKVKDKAEEQANQRLVEILVPSPQKQTGFKNPLEMLFGGNQNVNQTSESQDDTEIQKKRQEVEKQLAAGLLEEEIVSIEVTEQQSSMFDMLQGTGMEQMGMNFQDALGSFMPKKTKKRKLSVKEARKVLTNEEAQRLIDMDEVTQEAVYRAEQLGIIFIDEIDKIAGKQSNSVDVSREGVQRDILPIVEGANVATKYGSVKTDYILFVAAGAFHMSKPSDLIPELQGRFPIRVELTKLSVDDFVKILIEPDNALVKQYAALLATEGIEIEFSDEAIRKIAEIAYQVNQDTDNIGARRLHTIMEKLLEDLSFEASEITLEKVTITPQYVEEKLATIAKNKDVSQFIL.

ATP contacts are provided by residues Ile-19, 61–66 (GVGKTE), Asp-277, Glu-341, and Arg-413.

It belongs to the ClpX chaperone family. HslU subfamily. A double ring-shaped homohexamer of HslV is capped on each side by a ring-shaped HslU homohexamer. The assembly of the HslU/HslV complex is dependent on binding of ATP.

It localises to the cytoplasm. In terms of biological role, ATPase subunit of a proteasome-like degradation complex; this subunit has chaperone activity. The binding of ATP and its subsequent hydrolysis by HslU are essential for unfolding of protein substrates subsequently hydrolyzed by HslV. HslU recognizes the N-terminal part of its protein substrates and unfolds these before they are guided to HslV for hydrolysis. The polypeptide is ATP-dependent protease ATPase subunit HslU (Bacillus cytotoxicus (strain DSM 22905 / CIP 110041 / 391-98 / NVH 391-98)).